The primary structure comprises 1029 residues: FYVE, RhoGEF and PH domain-containing protein tag-77 (1029 aa).

Basic and acidic residues-rich tracts occupy residues 1–12 (MKYDMNHRKNSD) and 20–39 (TVKE…DNRF). 3 disordered regions span residues 1 to 155 (MKYD…ATSE), 185 to 254 (VPRM…ERKT), and 279 to 370 (NNGV…EKDD). Residues 42–56 (QPPPPPSPRRAPPPP) are compositionally biased toward pro residues. Low complexity-rich tracts occupy residues 76 to 85 (PPSSSESSEN) and 122 to 133 (SSSTSDVSSQNS). Polar residues-rich tracts occupy residues 141–155 (SCTT…ATSE) and 200–211 (PISQVSTLSQVS). Positions 212–227 (DEFDEGDTSASDEESM) are enriched in acidic residues. Residues 316 to 334 (SPTSGMSSSSTDDFSRITS) are compositionally biased toward low complexity. Positions 335–347 (MTSDRSSILTSHS) are enriched in polar residues. In terms of domain architecture, DH spans 375–572 (KLHYAAVEFL…ENVTQAVNQK (198 aa)). The 104-residue stretch at 593-696 (NVLEPGRVLI…WTDDLTKAQY (104 aa)) folds into the PH domain. 7 residues coordinate Zn(2+): C810, C823, C826, C831, C834, C851, and C854. The segment at 810–859 (CSTEFNIINRRHHCRDCGWLICKFCKGQAPLSKYDFTKQNVCSECFDRHY) adopts an FYVE-type; degenerate zinc-finger fold.

It localises to the cytoplasm. The protein localises to the cytoskeleton. Its function is as follows. Activates cdc-42, a member of the Ras-like family of Rho- and Rac proteins, by exchanging bound GDP for free GTP. May play a role in regulating the actin cytoskeleton and cell shape. Required for normal lifespan. This Caenorhabditis elegans protein is FYVE, RhoGEF and PH domain-containing protein tag-77.